The following is a 346-amino-acid chain: Olfactory receptor 8G5 (346 aa).

Over 1–60 the chain is Extracellular; that stretch reads MIIYKQGITFLQKENNNTIHLNTMFFLSPAETHQRMAAENHSFVTKFILVGLTEKSELQL. N-linked (GlcNAc...) asparagine glycans are attached at residues Asn16 and Asn40. A helical transmembrane segment spans residues 61-81; sequence PLFLVFLGIYVVTVLGNLGMI. At 82–89 the chain is on the cytoplasmic side; sequence TLIGLSSH. A helical transmembrane segment spans residues 90–110; sequence LHTPMYCFLSSLSFIDFCHST. At 111 to 134 the chain is on the extracellular side; it reads VITPKMLVNFVTEKNIISYPECMT. Cys132 and Cys214 form a disulfide bridge. A helical membrane pass occupies residues 135-155; sequence QLYFFLVFAIAECHMLAAMAY. Residues 156-174 are Cytoplasmic-facing; sequence DGYVAICSPLLYSIIISNK. A helical transmembrane segment spans residues 175-195; it reads ACFSLILVVYVIGLICASAHI. The Extracellular segment spans residues 196–232; sequence GCMFRVQFCKFDVINHYFCDLISILKLSCSSTYINEL. The helical transmembrane segment at 233–252 threads the bilayer; it reads LILIFSGINILVPSLTILSS. Over 253-272 the chain is Cytoplasmic; sequence YIFIIASILRIRYTEGRSKA. Residues 273-293 form a helical membrane-spanning segment; sequence FSTCSSHISAVSVFFGSAAFM. Residues 294 to 306 lie on the Extracellular side of the membrane; it reads YLQPSSVSSMDQG. A helical transmembrane segment spans residues 307 to 327; it reads KVSSVFYTIVVPMLNPLIYSL. Residues 328–346 lie on the Cytoplasmic side of the membrane; that stretch reads RNKDVHVALKKTLGKRTFL.

This sequence belongs to the G-protein coupled receptor 1 family.

The protein resides in the cell membrane. Its function is as follows. Odorant receptor. The chain is Olfactory receptor 8G5 (OR8G5) from Homo sapiens (Human).